A 174-amino-acid chain; its full sequence is Peptide deformylase (174 aa).

Fe cation contacts are provided by Cys96 and His138. The active site involves Glu139. A Fe cation-binding site is contributed by His142.

Belongs to the polypeptide deformylase family. Fe(2+) is required as a cofactor.

The enzyme catalyses N-terminal N-formyl-L-methionyl-[peptide] + H2O = N-terminal L-methionyl-[peptide] + formate. In terms of biological role, removes the formyl group from the N-terminal Met of newly synthesized proteins. Requires at least a dipeptide for an efficient rate of reaction. N-terminal L-methionine is a prerequisite for activity but the enzyme has broad specificity at other positions. The sequence is that of Peptide deformylase from Nautilia profundicola (strain ATCC BAA-1463 / DSM 18972 / AmH).